Reading from the N-terminus, the 869-residue chain is DNA mismatch repair protein MutS (869 aa).

Residue 619–626 participates in ATP binding; that stretch reads GPNMAGKS.

This sequence belongs to the DNA mismatch repair MutS family.

Functionally, this protein is involved in the repair of mismatches in DNA. It is possible that it carries out the mismatch recognition step. This protein has a weak ATPase activity. The polypeptide is DNA mismatch repair protein MutS (Caldanaerobacter subterraneus subsp. tengcongensis (strain DSM 15242 / JCM 11007 / NBRC 100824 / MB4) (Thermoanaerobacter tengcongensis)).